The chain runs to 122 residues: Small ribosomal subunit protein uS13 (122 aa).

Residues 95–122 form a disordered region; the sequence is NLPVRGQRTHTNARTRKGKAKPIAGKKK.

This sequence belongs to the universal ribosomal protein uS13 family. As to quaternary structure, part of the 30S ribosomal subunit. Forms a loose heterodimer with protein S19. Forms two bridges to the 50S subunit in the 70S ribosome.

Its function is as follows. Located at the top of the head of the 30S subunit, it contacts several helices of the 16S rRNA. In the 70S ribosome it contacts the 23S rRNA (bridge B1a) and protein L5 of the 50S subunit (bridge B1b), connecting the 2 subunits; these bridges are implicated in subunit movement. Contacts the tRNAs in the A and P-sites. The chain is Small ribosomal subunit protein uS13 from Methylobacterium sp. (strain 4-46).